We begin with the raw amino-acid sequence, 317 residues long: Cell division protein FtsQ (317 aa).

The Cytoplasmic portion of the chain corresponds to 1-63; that stretch reads MDGGGRFVFA…RIHIPAHTGT (63 aa). A helical transmembrane segment spans residues 64-82; sequence ISAVAFYAMIGLYGMSLGG. Residues 83 to 317 are Periplasmic-facing; that stretch reads HTNIVTQTTT…KALKKAEKNT (235 aa). The region spanning 97 to 165 is the POTRA domain; that stretch reads FAVEDVKVSG…KTVEVRLKER (69 aa).

It belongs to the FtsQ/DivIB family. FtsQ subfamily.

The protein localises to the cell inner membrane. Essential cell division protein. This Agrobacterium fabrum (strain C58 / ATCC 33970) (Agrobacterium tumefaciens (strain C58)) protein is Cell division protein FtsQ.